A 545-amino-acid chain; its full sequence is Chaperonin GroEL 1 (545 aa).

Residues 29-32 (TLGP), 86-90 (DGTTT), Gly413, 479-481 (DAA), and Asp495 contribute to the ATP site. Residues 525 to 545 (PEPKENNPAGSGAGMGGDFDY) are disordered. Residues 535–545 (SGAGMGGDFDY) are compositionally biased toward gly residues.

This sequence belongs to the chaperonin (HSP60) family. As to quaternary structure, forms a cylinder of 14 subunits composed of two heptameric rings stacked back-to-back. Interacts with the co-chaperonin GroES.

It is found in the cytoplasm. It catalyses the reaction ATP + H2O + a folded polypeptide = ADP + phosphate + an unfolded polypeptide.. In terms of biological role, together with its co-chaperonin GroES, plays an essential role in assisting protein folding. The GroEL-GroES system forms a nano-cage that allows encapsulation of the non-native substrate proteins and provides a physical environment optimized to promote and accelerate protein folding. This is Chaperonin GroEL 1 from Thermostichus vulcanus (Synechococcus vulcanus).